The sequence spans 580 residues: Acyl--CoA ligase GME11374 (580 aa).

It belongs to the ATP-dependent AMP-binding enzyme family.

The protein operates within secondary metabolite biosynthesis. Functionally, acyl--CoA ligase; part of the gene cluster that mediates the biosynthesis of dibenzodioxocinones such as pestalotiollide B, a novel class of inhibitors against cholesterol ester transfer protein (CEPT). The biosynthesis initiates from condensation of acetate and malonate units catalyzed by the non-reducing PKS pks8/GME11356. Pks8/GME11356 lacks a thioesterase (TE) domain, which is important to the cyclizing of the third ring of atrochrysone carboxylic acid, and the esterase GME11355 might play the role of TE and catalyzes the cyclization reaction of the C ring. The lactamase-like protein GME11357 (or other beta-lactamases in Pestalotiopsis microspora) probably hydrolyzes the thioester bond between the ACP of pks8/GME11356 and the intermediate to release atrochrysone carboxylic acid, which is spontaneously dehydrates to form endocrocin anthrone. Endocrocin anthrone is further converted to emodin via the endocrocin intermediate. Emodin is then oxidized by several enzymes such as the Baeyer-Villiger oxidase GME11358, the oxidoreductase GME11367, the short chain dehydrogenase/reductase GME11373, as well as by other oxidoreductases from the cluster, to modify the A and C rings and open the B ring, and finally yield monodictyphenone. The prenyltransferase GME11375 may catalyze the addition reaction between the C5 side chains and the carbon bone of dibenzodioxocinones. The remaining biochemical reactions to the final product dibenzodioxocinones should be methylation catalyzed by methyltransferase GME11366 and reduction and lactonization reaction catalyzed by a series of oxidordeuctases. The sequence is that of Acyl--CoA ligase GME11374 from Pestalotiopsis microspora.